The primary structure comprises 495 residues: Neuronal acetylcholine receptor subunit alpha-3 (495 aa).

Residues 1–21 (MARRSRLRRLLLLLLLPVAST) form the signal peptide. Residues 22–240 (SDAEHRLFER…PLFYTINLII (219 aa)) lie on the Extracellular side of the membrane. Asparagine 45 and asparagine 162 each carry an N-linked (GlcNAc...) asparagine glycan. Cystine bridges form between cysteine 149–cysteine 163 and cysteine 213–cysteine 214. The helical transmembrane segment at 241–256 (PCLLISFLTVLVFYLP) threads the bilayer. Topologically, residues 257–258 (SD) are cytoplasmic. Residues 259 to 275 (CGEKVTLCISVLLSLTV) traverse the membrane as a helical segment. Residue glutamate 261 participates in Na(+) binding. Residues 276-297 (FLLVITETIPSTSLVIPLIGEY) are Extracellular-facing. A helical transmembrane segment spans residues 298–316 (LLFTMIFVTLSIVITVFVL). The Cytoplasmic portion of the chain corresponds to 317–464 (NVHYRTPTTH…QDDWKYVAMV (148 aa)). Phosphoserine is present on residues serine 403 and serine 406. A helical membrane pass occupies residues 465–483 (IDRIFLWVFILVCILGTAG). At 484–495 (LFLQPLMTRDDA) the chain is on the extracellular side.

This sequence belongs to the ligand-gated ion channel (TC 1.A.9) family. Acetylcholine receptor (TC 1.A.9.1) subfamily. Alpha-3/CHRNA3 sub-subfamily. In terms of assembly, neuronal AChR is composed of two different types of subunits: alpha and beta. CHRNA3/Alpha-3 subunit can be combined to CHRNB2/beta-2 or CHRNB4/beta-4 to give rise to functional receptors. Part of a complex composed of STUB1/CHIP, VCP/p97, CHRNA3, and UBXN2A that modulates the ubiquitination and endoplasmic reticulum-associated degradation (ERAD) of CHRNA3. Within the complex UBXN2A acts as a scaffold protein required for the interaction of CHRNA3 with VCP/p97, this interaction also inhibits CHRNA3 ubiquitination by STUB1/CHIP and subsequently ERAD. Interacts with UBXN2A (via SEP domain), the interaction is required for the interaction of CHRNA3 in the STUB1:VCP:UBXN2A complex. Interacts with RIC3; which is required for proper folding and assembly. Interacts with LYPD6. In terms of processing, ubiquitinated; by STUB1/CHIP and thereafter degraded by the 26S proteosome complex.

It is found in the synaptic cell membrane. It localises to the cell membrane. The protein resides in the endoplasmic reticulum. The protein localises to the golgi apparatus. The enzyme catalyses K(+)(in) = K(+)(out). It catalyses the reaction Na(+)(in) = Na(+)(out). It carries out the reaction Ca(2+)(in) = Ca(2+)(out). With respect to regulation, activated by a myriad of ligands such as acetylcholine, cytisine, nicotine, choline and epibatidine. The heteropentamer CHRNA3:CHRNB2 activity is blocked by alpha-conotoxins ImI, ImII, PnIA, GID and MII. The heteropentamer CHRNA3:CHRNB4 activity is blocked by the alpha-conotoxin ImI and AuIB. Component of neuronal acetylcholine receptors (nAChRs) that function as pentameric, ligand-gated cation channels with high calcium permeability among other activities. nAChRs are excitatory neurotrasnmitter receptors formed by a collection of nAChR subunits known to mediate synaptic transmission in the nervous system and the neuromuscular junction. Each nAchR subunit confers differential attributes to channel properties, including activation, deactivation and desensitization kinetics, pH sensitivity, cation permeability, and binding to allosteric modulators. CHRNA3 forms heteropentameric neuronal acetylcholine receptors with CHRNB2 and CHRNB4. CHRNA3:CHRNB4 being predominant in neurons of the autonomic ganglia, it is known as ganglionic nicotinic receptor. CHRNA3:CHRNB4 also plays an important role in the habenulo-interpeduncular tract, modulating the mesolimbic dopamine system and affecting reward circuits and addiction. Hypothalamic CHRNA3:CHRNB4 nAChR activation by nicotine leads to activation of POMC neurons and a decrease in food intake. Also expressed in the urothelium where it modulates reflex bladder activity by increasing intracellular calcium through extracellular influx and basal ATP release. This chain is Neuronal acetylcholine receptor subunit alpha-3 (CHRNA3), found in Bos taurus (Bovine).